An 896-amino-acid polypeptide reads, in one-letter code: MAGDSRNEPMFCEEGSSESGYVLCVIDSLKKKITSDRFVYIQKRVEENSIKLSPITLHSHNLSKNRQTSTSNSTDLVSNLLTKRKEDALCAVNSRESSPDESEGANCQDECSSTVIVGGNLSARNSVRPIRLPEVATLPPYTTWIFLDRNQRMQEDQSVLGRRRIYYDTNCGEALICSDSEDEAVEDEEEKKEFKDSEDCIIRMTIQECGMSDAVLETLARDIERAPDDIKARYEILQGEKPEGSSKKVSELNVKMEDVYGDKDLDAALDSFDNLFCRRCLVFDCKLHGCSQDLVFPTEKQAPLCSSDEGTPCGIHCYKLVSKPDAIMEIDSHLLVDVEEPTSDNLKDQIGSNKKKLGSSGQKTKSQQSESSSTARVSSESSESEVQLLSNKSPQHSPGLSKNKLGAKGGIKKSTNRRIAERILMSVKKGQQEMSPDSNSIVNGCHWPRDMKLRSDTRSGIKDSVVSSQCNSPSTRSFRKKGTLQMENNSSFVDAQSDSMEDTNNEHSATDGCDSSRKEECVDESICRQEAHGRSWKVIEQGLLLKGLEIFGKNSCLIARNLLGGMKTCTDVFQYMNYIENSSASGALSGVDSLVKGYMKGNELRTRSRFVRRRGRVRRLKYTWKTAGYHFIRKRITERKDQPCRQYTPCGCQSACGKQCPCLTNGTCCEKYCGCPKMCKNRFRGCHCAKSQCRSRQCPCFAADRECDPDVCRNCWVGCGDGTLGVPNQRGDNYECRNMKLLLKQQQRVLLGRSDVSGWGAFLKNSVGKHEYLGEYTGELISHKEADKRGKIYDRENSSFLFNLNNEYVLDAYRMGDKLKFANHSPDPNCYAKVIMVAGDHRVGIFAKERISAGEELFYDYRYEPDRAPAWARKPEGPGAKDDAQPSTGRAKKLAH.

Disordered stretches follow at residues 344–419 (DNLK…NRRI) and 459–514 (SGIK…DGCD). Residues 358 to 390 (GSSGQKTKSQQSESSSTARVSSESSESEVQLLS) are compositionally biased toward low complexity. Polar residues-rich tracts occupy residues 391-400 (NKSPQHSPGL), 465-476 (VVSSQCNSPSTR), and 485-498 (QMENNSSFVDAQSD). The segment covering 504–514 (NNEHSATDGCD) has biased composition (basic and acidic residues). Residues 633–732 (RKRITERKDQ…TLGVPNQRGD (100 aa)) enclose the CXC domain. The 116-residue stretch at 747–862 (QRVLLGRSDV…AGEELFYDYR (116 aa)) folds into the SET domain. Y861 provides a ligand contact to S-adenosyl-L-methionine. Residues 869-884 (PAWARKPEGPGAKDDA) show a composition bias toward basic and acidic residues. The disordered stretch occupies residues 869 to 896 (PAWARKPEGPGAKDDAQPSTGRAKKLAH).

Belongs to the class V-like SAM-binding methyltransferase superfamily. Histone-lysine methyltransferase family. EZ subfamily. As to quaternary structure, interacts with FIE1. Component of the polycomb repressive complex 2 (PRC2), composed of the core PRC2 components FIE2, EMF2B and EZ1. PRC2 methylates 'Lys-27' residues of histone H3 (H3K27me3), leading to transcriptional repression of the affected target gene. Widely expressed. Highly expressed in young panicle.

It catalyses the reaction L-lysyl(27)-[histone H3] + 3 S-adenosyl-L-methionine = N(6),N(6),N(6)-trimethyl-L-lysyl(27)-[histone H3] + 3 S-adenosyl-L-homocysteine + 3 H(+). Its function is as follows. Polycomb group (PcG) protein. Catalytic subunit of some PcG multiprotein complex, which methylates 'Lys-27' of histone H3, leading to transcriptional repression of the affected target genes. PcG proteins act by forming multiprotein complexes, which are required to maintain the transcriptionally repressive state of homeotic genes throughout development. PcG proteins are not required to initiate repression, but to maintain it during later stages of development. Involved in the regulation of flowering. Represses flowering under long day (LD) conditions. Regulates the trimethylation on histone H3 'Lys-27' (H3K27me3) of the flowering regulators MADS14, MADS15, RFT1, EHD1, HD3A and LF. In Oryza sativa subsp. japonica (Rice), this protein is Histone-lysine N-methyltransferase CLF.